The following is a 151-amino-acid chain: Transcriptional regulator MraZ (151 aa).

SpoVT-AbrB domains are found at residues 5 to 52 and 81 to 124; these read ANAI…PLDE and AVDL…DEDA.

Belongs to the MraZ family. In terms of assembly, forms oligomers.

The protein resides in the cytoplasm. It localises to the nucleoid. This is Transcriptional regulator MraZ from Pseudomonas fluorescens (strain ATCC BAA-477 / NRRL B-23932 / Pf-5).